The following is a 420-amino-acid chain: MSFTTISVIGLGYIGLPTAAAFASRQKQVIGVDINQHAVDTINRGEIHIVEPALGNVVKMAVEGGFLRATTTPVEADAYLIAVPTPFKGDHDPDMAYVEAAAKSIAPVLKKGALVILESTSPVGATEQMAGWLAGMRPDLTFPQQAGEQADVNIAYCPERVLPGQVMVELIKNDRVIGGMTPVCSARASALYKIFLEGECVVTNSRTAEMCKLTENSFRDVNIAFANELSLICAEQGINVWELIRLANRHPRVNILQPGPGVGGHCIAVDPWFIVAQNPQQARLIRTAREVNDGKPHWVVDQVKAAVADCLAATDKRASEVKIACFGLAFKPNIDDLRESPAMGIAQSIARWHSGETLVVEPNIRQLPKKLDGLCTLAKLDAALAAADVLVMLVDHDEFKAIPGDAVHQRYVVDTKGVWR.

Y13, I14, D33, T85, and T126 together coordinate NAD(+). UDP-N-acetyl-alpha-D-mannosaminouronate contacts are provided by R160, V161, K212, N216, R219, H250, R252, and G263. Catalysis depends on K212, which acts as the Proton donor/acceptor. The active-site Nucleophile is the C266. Residues F330 and K331 each coordinate UDP-N-acetyl-alpha-D-mannosaminouronate. R338 contacts NAD(+). Residue K416 coordinates UDP-N-acetyl-alpha-D-mannosaminouronate.

This sequence belongs to the UDP-glucose/GDP-mannose dehydrogenase family. WecC subfamily. Homodimer.

The catalysed reaction is UDP-N-acetyl-alpha-D-mannosamine + 2 NAD(+) + H2O = UDP-N-acetyl-alpha-D-mannosaminouronate + 2 NADH + 3 H(+). It participates in bacterial outer membrane biogenesis; enterobacterial common antigen biosynthesis. Functionally, catalyzes the four-electron oxidation of UDP-N-acetyl-D-mannosamine (UDP-ManNAc), reducing NAD(+) and releasing UDP-N-acetylmannosaminuronic acid (UDP-ManNAcA). The sequence is that of UDP-N-acetyl-D-mannosamine dehydrogenase from Salmonella typhi.